A 610-amino-acid polypeptide reads, in one-letter code: Probable methyltransferase PMT22 (610 aa).

The Cytoplasmic segment spans residues 1 to 10; it reads MIKNIFQSRK. A helical; Signal-anchor for type II membrane protein membrane pass occupies residues 11 to 31; the sequence is LSGLCVLSILLVSVTILLLTN. The Lumenal portion of the chain corresponds to 32-610; sequence DTIDLFPYLS…LVGLKSSWRP (579 aa). Low complexity predominate over residues 56–69; sequence STPISSPTNDSSPP. Residues 56–81 are disordered; the sequence is STPISSPTNDSSPPLESPVNQTRVDD. N-linked (GlcNAc...) asparagine glycans are attached at residues N64, N75, N100, N400, N469, and N546.

The protein belongs to the methyltransferase superfamily.

It localises to the endoplasmic reticulum membrane. This Arabidopsis thaliana (Mouse-ear cress) protein is Probable methyltransferase PMT22.